The following is a 213-amino-acid chain: Chloramphenicol acetyltransferase 2 (213 aa).

Catalysis depends on His-189, which acts as the Proton acceptor.

Belongs to the chloramphenicol acetyltransferase family. In terms of assembly, homotrimer.

It carries out the reaction chloramphenicol + acetyl-CoA = chloramphenicol 3-acetate + CoA. Its function is as follows. This enzyme is an effector of chloramphenicol resistance in bacteria. This chain is Chloramphenicol acetyltransferase 2 (cat-IIH), found in Haemophilus influenzae.